The sequence spans 455 residues: Probable glycine dehydrogenase (decarboxylating) subunit 1 (455 aa).

Belongs to the GcvP family. N-terminal subunit subfamily. The glycine cleavage system is composed of four proteins: P, T, L and H. In this organism, the P 'protein' is a heterodimer of two subunits.

It carries out the reaction N(6)-[(R)-lipoyl]-L-lysyl-[glycine-cleavage complex H protein] + glycine + H(+) = N(6)-[(R)-S(8)-aminomethyldihydrolipoyl]-L-lysyl-[glycine-cleavage complex H protein] + CO2. In terms of biological role, the glycine cleavage system catalyzes the degradation of glycine. The P protein binds the alpha-amino group of glycine through its pyridoxal phosphate cofactor; CO(2) is released and the remaining methylamine moiety is then transferred to the lipoamide cofactor of the H protein. The protein is Probable glycine dehydrogenase (decarboxylating) subunit 1 of Francisella tularensis subsp. tularensis (strain FSC 198).